The chain runs to 367 residues: Polygalacturonase (367 aa).

A signal peptide spans 1–18; it reads MRTSFVTMLALGAAAVSA. Cysteines 34 and 49 form a disulfide. PbH1 repeat units lie at residues 161–191, 192–213, 214–234, 243–264, and 272–294; these read ADRL…DVGS, STFI…AINS, GSNI…SIGS, VKDV…RVKT, and VSGV…VIEQ. The Proton donor role is filled by D206. C208 and C224 are joined by a disulfide. The active site involves H228. N-linked (GlcNAc...) asparagine glycans are attached at residues N318 and N336. Cystine bridges form between C334–C339 and C358–C367.

This sequence belongs to the glycosyl hydrolase 28 family.

The protein localises to the secreted. The catalysed reaction is (1,4-alpha-D-galacturonosyl)n+m + H2O = (1,4-alpha-D-galacturonosyl)n + (1,4-alpha-D-galacturonosyl)m.. The sequence is that of Polygalacturonase (PG1) from Penicillium digitatum (Green mold).